Here is a 394-residue protein sequence, read N- to C-terminus: Flavohemoprotein (394 aa).

The Globin domain maps to 1–136 (MISQQTIDIV…LANVFITREE (136 aa)). H85 contacts heme b. Catalysis depends on charge relay system residues Y95 and E135. Positions 147-394 (GGWRGTREFT…YECFGPHKVL (248 aa)) are reductase. The 106-residue stretch at 150–255 (RGTREFTLIE…AAPAGDFFLD (106 aa)) folds into the FAD-binding FR-type domain. FAD is bound by residues Y188 and 204 to 207 (RQYS). 268-273 (GVGLTP) is an NADP(+) binding site. Position 387–390 (387–390 (CFGP)) interacts with FAD.

It belongs to the globin family. Two-domain flavohemoproteins subfamily. The protein in the C-terminal section; belongs to the flavoprotein pyridine nucleotide cytochrome reductase family. The cofactor is heme b. It depends on FAD as a cofactor.

It carries out the reaction 2 nitric oxide + NADPH + 2 O2 = 2 nitrate + NADP(+) + H(+). The catalysed reaction is 2 nitric oxide + NADH + 2 O2 = 2 nitrate + NAD(+) + H(+). Its function is as follows. Is involved in NO detoxification in an aerobic process, termed nitric oxide dioxygenase (NOD) reaction that utilizes O(2) and NAD(P)H to convert NO to nitrate, which protects the bacterium from various noxious nitrogen compounds. Therefore, plays a central role in the inducible response to nitrosative stress. This is Flavohemoprotein from Photobacterium profundum (strain SS9).